The sequence spans 30 residues: Cyclotide hyen-G (30 aa).

The cyclopeptide (Gly-Asp) cross-link spans 1–30; the sequence is GLPCGESCVYIPCISTVLGCSCSNKVCYRD. Disulfide bonds link C4/C20, C8/C22, and C13/C27.

This is a cyclic peptide. Detected in stems (at protein level).

Its function is as follows. Probably participates in a plant defense mechanism. The chain is Cyclotide hyen-G from Pigea enneasperma (Spade flower).